Here is a 107-residue protein sequence, read N- to C-terminus: DNA-directed RNA polymerase subunit omega (107 aa).

This sequence belongs to the RNA polymerase subunit omega family. The RNAP catalytic core consists of 2 alpha, 1 beta, 1 beta' and 1 omega subunit. When a sigma factor is associated with the core the holoenzyme is formed, which can initiate transcription.

The enzyme catalyses RNA(n) + a ribonucleoside 5'-triphosphate = RNA(n+1) + diphosphate. In terms of biological role, promotes RNA polymerase assembly. Latches the N- and C-terminal regions of the beta' subunit thereby facilitating its interaction with the beta and alpha subunits. This is DNA-directed RNA polymerase subunit omega from Mycolicibacterium smegmatis (strain ATCC 700084 / mc(2)155) (Mycobacterium smegmatis).